The primary structure comprises 89 residues: Co-chaperonin GroES (89 aa).

The protein belongs to the GroES chaperonin family. In terms of assembly, heptamer of 7 subunits arranged in a ring. Interacts with the chaperonin GroEL.

The protein resides in the cytoplasm. Its function is as follows. Together with the chaperonin GroEL, plays an essential role in assisting protein folding. The GroEL-GroES system forms a nano-cage that allows encapsulation of the non-native substrate proteins and provides a physical environment optimized to promote and accelerate protein folding. GroES binds to the apical surface of the GroEL ring, thereby capping the opening of the GroEL channel. In Petrotoga mobilis (strain DSM 10674 / SJ95), this protein is Co-chaperonin GroES.